Here is a 552-residue protein sequence, read N- to C-terminus: MLDHKDLEAEIHPLKNEERKSQENLGNPSKNEDNVKSAPPQSRLSRCRAAAFFLSLFLCLFVVFVVSFVIPCPDRPASQRMWRIDYSAAVIYDFLAVDDINGDRIQDVLFLYKNTNSSNNFSRSCVDEGFSSPCTFAAAVSGANGSTLWERPVAQDVALVECAVPQPRGSEAPSACILVGRPSSFIAVNLFTGETLWNHSSSFSGNASILSPLLQVPDVDGDGAPDLLVLTQEREEVSGHLYSGSTGHQIGLRGSLGVDGESGFLLHVTRTGAHYILFPCASSLCGCSVKGLYEKVTGSGGPFKSDPHWESMLNATTRRMLSHSSGAVRYLMHVPGNAGADVLLVGSEAFVLLDGQELTPRWTPKAAHVLRKPIFGRYKPDTLAVAVENGTGTDRQILFLDLGTGAVLCSLALPSLPGGPLSASLPTADHRSAFFFWGLHELGSTSETETGEARHSLYMFHPTLPRVLLELANVSTHIVAFDAVLFEPSRHAAYILLTGPADSEAPGLVSVIKHKVRDLVPSSRVVRLGEGGPDSDQAIRDRFSRLRYQSEA.

Positions 1-22 (MLDHKDLEAEIHPLKNEERKSQ) are enriched in basic and acidic residues. The disordered stretch occupies residues 1–40 (MLDHKDLEAEIHPLKNEERKSQENLGNPSKNEDNVKSAPP). The Cytoplasmic portion of the chain corresponds to 1–49 (MLDHKDLEAEIHPLKNEERKSQENLGNPSKNEDNVKSAPPQSRLSRCRA). A Phosphoserine modification is found at Ser21. Residues 50–70 (AAFFLSLFLCLFVVFVVSFVI) traverse the membrane as a helical; Signal-anchor for type II membrane protein segment. Over 71–552 (PCPDRPASQR…FSRLRYQSEA (482 aa)) the chain is Extracellular. N-linked (GlcNAc...) asparagine glycans are attached at residues Asn116, Asn314, Asn389, and Asn473.

This sequence belongs to the FAM234 family.

It localises to the membrane. The sequence is that of Protein FAM234A from Homo sapiens (Human).